The sequence spans 316 residues: Ribosomal RNA small subunit methyltransferase H (316 aa).

S-adenosyl-L-methionine is bound by residues 35–37 (GGH), Asp55, Phe79, Asp101, and Gln108.

The protein belongs to the methyltransferase superfamily. RsmH family.

The protein localises to the cytoplasm. It catalyses the reaction cytidine(1402) in 16S rRNA + S-adenosyl-L-methionine = N(4)-methylcytidine(1402) in 16S rRNA + S-adenosyl-L-homocysteine + H(+). Specifically methylates the N4 position of cytidine in position 1402 (C1402) of 16S rRNA. The protein is Ribosomal RNA small subunit methyltransferase H of Vibrio vulnificus (strain CMCP6).